A 133-amino-acid polypeptide reads, in one-letter code: Alpha-amylase inhibitor/endochitinase (133 aa).

Glu30 acts as the Proton donor in catalysis.

This sequence belongs to the glycosyl hydrolase 19 family. Chitinase class I subfamily.

The enzyme catalyses Random endo-hydrolysis of N-acetyl-beta-D-glucosaminide (1-&gt;4)-beta-linkages in chitin and chitodextrins.. In terms of biological role, this protein functions both as an alpha-amylase inhibitor and as a chitinase. The chain is Alpha-amylase inhibitor/endochitinase from Coix lacryma-jobi (Job's tears).